We begin with the raw amino-acid sequence, 183 residues long: Peptidoglycan recognition protein 1 (183 aa).

The N-terminal stretch at 1-17 is a signal peptide; it reads MLFAWAPFPALLGLADS. 3 cysteine pairs are disulfide-bonded: C18-C142, C34-C79, and C55-C61. Residues 40–168 enclose the N-acetylmuramoyl-L-alanine amidase domain; it reads KPVRYVVISH…RDVQSTLSPG (129 aa).

This sequence belongs to the N-acetylmuramoyl-L-alanine amidase 2 family. Expressed in all regions of the brain.

It is found in the secreted. The protein localises to the cytoplasmic granule. Its function is as follows. Innate immunity protein that plays several important functions in antimicrobial and antitumor defense systems. Acts as a pattern receptor that binds to murein peptidoglycans (PGN) of Gram-positive bacteria and thus provides bactericidal activity. Forms an equimolar complex with heat shock protein HSPA1A and induces programmed cell death through apoptosis and necroptosis in tumor cell lines by activating the TNFR1 receptor on the target cell membrane. In addition, acts in complex with the Ca(2+)-binding protein S100A4 as a chemoattractant able to induce lymphocyte movement. Mechanistically, this complex acts as a ligand of the chemotactic receptors CCR5 and CXCR3 which are present on the cells of the immune system. Promotes also the activation of lymphocytes that become able to kill virus-infected cells as well as tumor cells by modulating the spectrum of their target-cell specificity. Induction of cytotoxicity on monocyte surface requires interaction with TREM1 receptor. The chain is Peptidoglycan recognition protein 1 (Pglyrp1) from Rattus norvegicus (Rat).